The sequence spans 421 residues: Acetylglutamate kinase (421 aa).

Residues 1 to 252 are acetylglutamate kinase; the sequence is MASAKEISQY…PLESSVSITR (252 aa). Residues 59–60, Arg-81, and Asn-170 contribute to the substrate site; that span reads AG. An N-acetyltransferase domain is found at 274–420; it reads ERVIRATTWK…HCTQHPPTLI (147 aa).

It in the N-terminal section; belongs to the acetylglutamate kinase family. ArgB subfamily.

The protein localises to the cytoplasm. The catalysed reaction is N-acetyl-L-glutamate + ATP = N-acetyl-L-glutamyl 5-phosphate + ADP. The protein operates within amino-acid biosynthesis; L-arginine biosynthesis; N(2)-acetyl-L-ornithine from L-glutamate: step 2/4. This is Acetylglutamate kinase (argB) from Xylella fastidiosa (strain Temecula1 / ATCC 700964).